Consider the following 363-residue polypeptide: Ribosome-binding ATPase YchF (363 aa).

The region spanning 3-256 is the OBG-type G domain; that stretch reads FKCGIVGLPN…LDDDEKIEFL (254 aa). Residue 12–17 participates in ATP binding; it reads NVGKST. Residues serine 16 and threonine 36 each coordinate Mg(2+). Residues 278 to 361 form the TGS domain; that stretch reads NLQTYFTAGV…QDGDVMHFRF (84 aa).

The protein belongs to the TRAFAC class OBG-HflX-like GTPase superfamily. OBG GTPase family. YchF/OLA1 subfamily. Mg(2+) serves as cofactor.

Functionally, ATPase that binds to both the 70S ribosome and the 50S ribosomal subunit in a nucleotide-independent manner. The chain is Ribosome-binding ATPase YchF from Pasteurella multocida (strain Pm70).